The following is a 90-amino-acid chain: Acylphosphatase (90 aa).

An Acylphosphatase-like domain is found at 3-90 (RYSAIVQGRV…DGEKKFSIKY (88 aa)). Active-site residues include Arg18 and Asn36.

Belongs to the acylphosphatase family.

The catalysed reaction is an acyl phosphate + H2O = a carboxylate + phosphate + H(+). The polypeptide is Acylphosphatase (acyP) (Clostridium beijerinckii (strain ATCC 51743 / NCIMB 8052) (Clostridium acetobutylicum)).